Reading from the N-terminus, the 398-residue chain is Subtilisin-like serine protease EN45_076310 (398 aa).

Residues Met1–Ala19 form the signal peptide. A propeptide spans Gly20–Thr115 (removed in mature form). The Inhibitor I9 domain occupies Ser35–Asn113. The N-linked (GlcNAc...) asparagine glycan is linked to Asn113. The segment at Pro124–Lys134 is igE-binding. A Peptidase S8 domain is found at Ser125 to Gln398. Catalysis depends on Asp157, which acts as the Charge relay system. The igE-binding stretch occupies residues Gly163 to Arg170. A disordered region spans residues Thr175–Thr195. Residue His188 is the Charge relay system of the active site. Residues Ile227–Lys245 are igE-binding. N-linked (GlcNAc...) asparagine glycosylation is present at Asn249. Residues Ser310–Val318 form an igE-binding region. Residue Ser343 is the Charge relay system of the active site.

The protein belongs to the peptidase S8 family.

Its subcellular location is the secreted. Its activity is regulated as follows. Inhibited by phenylmethanesulfonyl fluoride (PMSF) and diethyl pyrocarbonate (DEPC), but not by benzamidine. Its function is as follows. Serine protease that hydrolyzes casein, gelatin and human collagen type IV, but not elastin in vitro. Hydrolyzes OCLN of the human lung epithelial cells at 202-Gln-|-Ser-203 and Gln-211-|-Ile-212. This chain is Subtilisin-like serine protease EN45_076310, found in Penicillium chrysogenum (Penicillium notatum).